An 89-amino-acid chain; its full sequence is MSLTQIRKQELMTEYQAHETDTGSADLQVAFLTERITQLTGHLKANPKDHASRRGLLKMIGRRKRLLSFINAREPERYQALIKRLGIRR.

It belongs to the universal ribosomal protein uS15 family. As to quaternary structure, part of the 30S ribosomal subunit. Forms a bridge to the 50S subunit in the 70S ribosome, contacting the 23S rRNA.

In terms of biological role, one of the primary rRNA binding proteins, it binds directly to 16S rRNA where it helps nucleate assembly of the platform of the 30S subunit by binding and bridging several RNA helices of the 16S rRNA. Forms an intersubunit bridge (bridge B4) with the 23S rRNA of the 50S subunit in the ribosome. The chain is Small ribosomal subunit protein uS15 from Synechocystis sp. (strain ATCC 27184 / PCC 6803 / Kazusa).